We begin with the raw amino-acid sequence, 245 residues long: 1-(5-phosphoribosyl)-5-[(5-phosphoribosylamino)methylideneamino] imidazole-4-carboxamide isomerase (245 aa).

Asp7 functions as the Proton acceptor in the catalytic mechanism. The active-site Proton donor is the Asp129.

It belongs to the HisA/HisF family.

It localises to the cytoplasm. It catalyses the reaction 1-(5-phospho-beta-D-ribosyl)-5-[(5-phospho-beta-D-ribosylamino)methylideneamino]imidazole-4-carboxamide = 5-[(5-phospho-1-deoxy-D-ribulos-1-ylimino)methylamino]-1-(5-phospho-beta-D-ribosyl)imidazole-4-carboxamide. Its pathway is amino-acid biosynthesis; L-histidine biosynthesis; L-histidine from 5-phospho-alpha-D-ribose 1-diphosphate: step 4/9. The sequence is that of 1-(5-phosphoribosyl)-5-[(5-phosphoribosylamino)methylideneamino] imidazole-4-carboxamide isomerase from Shewanella baltica (strain OS155 / ATCC BAA-1091).